The following is a 123-amino-acid chain: Transmembrane protein 254 (123 aa).

The next 3 helical transmembrane spans lie at 15 to 35 (LFWF…VFWP), 63 to 83 (NGYW…LVLC), and 95 to 115 (LLWF…LFAY).

Its subcellular location is the membrane. The polypeptide is Transmembrane protein 254 (Tmem254) (Rattus norvegicus (Rat)).